The sequence spans 172 residues: Ribosome maturation factor RimM (172 aa).

In terms of domain architecture, PRC barrel spans 96 to 169 (EGYFYHFQLQ…RMEIKLLPGL (74 aa)).

It belongs to the RimM family. In terms of assembly, binds ribosomal protein uS19.

The protein localises to the cytoplasm. An accessory protein needed during the final step in the assembly of 30S ribosomal subunit, possibly for assembly of the head region. Essential for efficient processing of 16S rRNA. May be needed both before and after RbfA during the maturation of 16S rRNA. It has affinity for free ribosomal 30S subunits but not for 70S ribosomes. This chain is Ribosome maturation factor RimM, found in Syntrophomonas wolfei subsp. wolfei (strain DSM 2245B / Goettingen).